The primary structure comprises 413 residues: Multidrug resistance protein MdtA (413 aa).

The first 20 residues, 1-20 (MKGSNTFRWAIAIGVVVAAA), serve as a signal peptide directing secretion. Disordered stretches follow at residues 31–57 (SPTAAPGVAAQAPHTAAAGRRGMRDGP) and 391–413 (EPQTTMADEKSPSRHEGQKGARA). The span at 397-413 (ADEKSPSRHEGQKGARA) shows a compositional bias: basic and acidic residues.

This sequence belongs to the membrane fusion protein (MFP) (TC 8.A.1) family. As to quaternary structure, part of a tripartite efflux system composed of MdtA, MdtB and MdtC.

It localises to the cell inner membrane. This chain is Multidrug resistance protein MdtA, found in Salmonella paratyphi C (strain RKS4594).